The sequence spans 307 residues: Transcription initiation factor IIB 5 (307 aa).

Residues 19–47 form a TFIIB-type zinc finger; that stretch reads TTEPCPECGGPVRTNSAETVCADCGLIID. Cys23, Cys26, Cys39, and Cys42 together coordinate Zn(2+). 2 stretches are compositionally biased toward basic and acidic residues: residues 54–66 and 107–121; these read GPEW…DTAK and MRRE…STKE. Positions 54–121 are disordered; sequence GPEWHRDDAD…SRGRWRSTKE (68 aa). A run of 2 repeats spans residues 129–212 and 223–304.

It belongs to the TFIIB family.

In terms of biological role, stabilizes TBP binding to an archaeal box-A promoter. Also responsible for recruiting RNA polymerase II to the pre-initiation complex (DNA-TBP-TFIIB). The protein is Transcription initiation factor IIB 5 of Halobacterium salinarum (strain ATCC 700922 / JCM 11081 / NRC-1) (Halobacterium halobium).